The sequence spans 438 residues: (3,5-dihydroxyphenyl)acetyl-CoA 1,2-dioxygenase (438 aa).

Residues Asp-183, Glu-189, 222 to 225 (HPRY), 233 to 238 (AGINLK), Gly-296, 325 to 327 (IPG), and Gln-416 each bind substrate.

This sequence belongs to the enoyl-CoA hydratase/isomerase family. As to quaternary structure, homohexamer; dimer of trimers.

The enzyme catalyses (3,5-dihydroxyphenyl)acetyl-CoA + O2 = 2-(3,5-dihydroxyphenyl)-2-oxoacetate + CoA + H(+). Its activity is regulated as follows. Inhibited by DPA-S-(N-acetylcysteamine). Its function is as follows. Involved in the biosynthesis of the nonproteinogenic amino acid monomer (S)-3,5-dihydroxyphenylglycine (Dpg) responsible of the production of vancomycin and teicoplanin antibiotics. Catalyzes the unusual conversion 3,5-dihydroxyphenylacetyl-CoA (DPA-CoA) to 3,5-dihydroxyphenylglyoxylate. DpgC performed a net four-electron oxidation of the benzylic carbon of DPA-CoA and the hydrolysis of the thioester bond to generate free CoA. DpgC has the ability to process a diverse range of substituted phenylacetyl-CoA substrates. In Streptomyces toyocaensis, this protein is (3,5-dihydroxyphenyl)acetyl-CoA 1,2-dioxygenase.